Consider the following 142-residue polypeptide: Chorion class A protein Ld12 (142 aa).

The first 18 residues, 1–18 (MNSFALLLVCIQACLVQS), serve as a signal peptide directing secretion.

This sequence belongs to the chorion protein family.

This protein is one of many from the eggshell of the gypsy moth. The chain is Chorion class A protein Ld12 from Lymantria dispar (Gypsy moth).